The sequence spans 497 residues: Probable malate:quinone oxidoreductase (497 aa).

Belongs to the MQO family. The cofactor is FAD.

It catalyses the reaction (S)-malate + a quinone = a quinol + oxaloacetate. It functions in the pathway carbohydrate metabolism; tricarboxylic acid cycle; oxaloacetate from (S)-malate (quinone route): step 1/1. This is Probable malate:quinone oxidoreductase from Rhodopseudomonas palustris (strain TIE-1).